The following is a 255-amino-acid chain: 3-alpha-(or 20-beta)-hydroxysteroid dehydrogenase (255 aa).

Residue 10 to 34 (IITGGARGLGAEAARQAVAAGARVV) coordinates NAD(+). Ser-139 is a substrate binding site. Tyr-152 functions as the Proton acceptor in the catalytic mechanism.

Belongs to the short-chain dehydrogenases/reductases (SDR) family. Homotetramer.

The catalysed reaction is androstan-3alpha,17beta-diol + NAD(+) = 17beta-hydroxyandrostanone + NADH + H(+). The protein operates within lipid metabolism; C21-steroid hormone metabolism. This Streptomyces exfoliatus (Streptomyces hydrogenans) protein is 3-alpha-(or 20-beta)-hydroxysteroid dehydrogenase.